Consider the following 887-residue polypeptide: Alanine--tRNA ligase (887 aa).

Residues His564, His568, Cys676, and His680 each coordinate Zn(2+).

This sequence belongs to the class-II aminoacyl-tRNA synthetase family. The cofactor is Zn(2+).

Its subcellular location is the cytoplasm. It catalyses the reaction tRNA(Ala) + L-alanine + ATP = L-alanyl-tRNA(Ala) + AMP + diphosphate. In terms of biological role, catalyzes the attachment of alanine to tRNA(Ala) in a two-step reaction: alanine is first activated by ATP to form Ala-AMP and then transferred to the acceptor end of tRNA(Ala). Also edits incorrectly charged Ser-tRNA(Ala) and Gly-tRNA(Ala) via its editing domain. The protein is Alanine--tRNA ligase of Chelativorans sp. (strain BNC1).